The chain runs to 227 residues: Cytidylate kinase (227 aa).

12 to 20 (GPSGAGKGT) serves as a coordination point for ATP.

This sequence belongs to the cytidylate kinase family. Type 1 subfamily.

Its subcellular location is the cytoplasm. It catalyses the reaction CMP + ATP = CDP + ADP. The enzyme catalyses dCMP + ATP = dCDP + ADP. The polypeptide is Cytidylate kinase (Sodalis glossinidius (strain morsitans)).